The sequence spans 419 residues: MSGNSSTDMYLFKKSLKELKGKKGKGTELISVYVPAGRRLSDISQYLRQELSQSSNIKSKTTMKNVQSAIEVILQRLKLLKEPLEMGVIIFAGMIPRGGPGTEKMEVYVLEPPEPVKTFVYRCDSLFYTDPLEDFIQDTEVYGVILVDRNEATIGTVKGKTITVLKKLTSGVPGKFKAGGQSARRLERLIDDAAHQFMVRIGEYATESFMPILEEKKLKGLLLGGPGNTKNEFAEKDYLHHELKKKIIDTFDLCYTEEFGIRELLDKASDLLRDLDLMKEKNLIQKFFKELIKDDGGLSAYGEAQVMKYLEMGAIDTLIVTEDIGITRVTVKCNNCDYAQEVNVKTNEMFKFEEQLKTKACPTCGGAMYIDEEKDIIEHLSDLCHMHNTDIIVVSTDTEEGSQISRAFKGMAAILRYKL.

The protein belongs to the eukaryotic release factor 1 family. In terms of assembly, heterodimer of two subunits, one of which binds GTP.

It is found in the cytoplasm. Its function is as follows. Directs the termination of nascent peptide synthesis (translation) in response to the termination codons UAA, UAG and UGA. In Methanococcus maripaludis (strain C5 / ATCC BAA-1333), this protein is Peptide chain release factor subunit 1.